The sequence spans 668 residues: tRNA 5-methylaminomethyl-2-thiouridine biosynthesis bifunctional protein MnmC (668 aa).

The tract at residues 1 to 245 (MKHYSIQPAN…KREMLCGVME (245 aa)) is tRNA (mnm(5)s(2)U34)-methyltransferase. Residues 270 to 668 (IGGGIASALL…LLKGKAVKAG (399 aa)) are FAD-dependent cmnm(5)s(2)U34 oxidoreductase.

In the N-terminal section; belongs to the methyltransferase superfamily. tRNA (mnm(5)s(2)U34)-methyltransferase family. The protein in the C-terminal section; belongs to the DAO family. Requires FAD as cofactor.

It localises to the cytoplasm. The enzyme catalyses 5-aminomethyl-2-thiouridine(34) in tRNA + S-adenosyl-L-methionine = 5-methylaminomethyl-2-thiouridine(34) in tRNA + S-adenosyl-L-homocysteine + H(+). Its function is as follows. Catalyzes the last two steps in the biosynthesis of 5-methylaminomethyl-2-thiouridine (mnm(5)s(2)U) at the wobble position (U34) in tRNA. Catalyzes the FAD-dependent demodification of cmnm(5)s(2)U34 to nm(5)s(2)U34, followed by the transfer of a methyl group from S-adenosyl-L-methionine to nm(5)s(2)U34, to form mnm(5)s(2)U34. In Escherichia coli (strain UTI89 / UPEC), this protein is tRNA 5-methylaminomethyl-2-thiouridine biosynthesis bifunctional protein MnmC.